Here is a 245-residue protein sequence, read N- to C-terminus: Photosystem II protein PSBS1 (245 aa).

Residues 1–25 (MAMTLSTKAFAQRGVSARKNTVRVY) constitute a chloroplast transit peptide. 4 helical membrane passes run 72 to 92 (LFVGRLAMVGFSASLIGEILT), 108 to 128 (GIEVDGLVIGLIAFNLIAAVL), 185 to 205 (LGFAFSLIGEAVTGKGALAQF), and 217 to 237 (EFGLVVFILFLLFAAINEGSG).

The protein belongs to the ELIP/psbS family.

The protein localises to the plastid. Its subcellular location is the chloroplast thylakoid membrane. Required for non-photochemical quenching (NPQ), a mechanism that converts and dissipates the harmful excess absorbed light energy into heat and protect the photosynthetic apparatus from photo-oxidative damage. Seems involved in the activation of NPQ, possibly by promoting conformational changes required for activation of LHCSR3-dependent quenching in the antenna of photosystem II (PSII). In Chlamydomonas reinhardtii (Chlamydomonas smithii), this protein is Photosystem II protein PSBS1.